The following is a 347-amino-acid chain: Nicotinate-nucleotide--dimethylbenzimidazole phosphoribosyltransferase (347 aa).

The active-site Proton acceptor is E316.

It belongs to the CobT family.

It carries out the reaction 5,6-dimethylbenzimidazole + nicotinate beta-D-ribonucleotide = alpha-ribazole 5'-phosphate + nicotinate + H(+). It participates in nucleoside biosynthesis; alpha-ribazole biosynthesis; alpha-ribazole from 5,6-dimethylbenzimidazole: step 1/2. In terms of biological role, catalyzes the synthesis of alpha-ribazole-5'-phosphate from nicotinate mononucleotide (NAMN) and 5,6-dimethylbenzimidazole (DMB). In Vibrio campbellii (strain ATCC BAA-1116), this protein is Nicotinate-nucleotide--dimethylbenzimidazole phosphoribosyltransferase.